The sequence spans 445 residues: Probable D-serine dehydratase (445 aa).

Position 111 is an N6-(pyridoxal phosphate)lysine (K111).

The protein belongs to the serine/threonine dehydratase family. DsdA subfamily. The cofactor is pyridoxal 5'-phosphate.

The enzyme catalyses D-serine = pyruvate + NH4(+). The chain is Probable D-serine dehydratase from Burkholderia pseudomallei (strain 668).